Here is a 178-residue protein sequence, read N- to C-terminus: Cysteine-rich venom protein VAR3 (178 aa).

The first 22 residues, 1–22 (MILLKLYLTLAAILCQSRGTTS), serve as a signal peptide directing secretion. Positions 41-169 (NKHNDLRRTV…PLKYFLVCQY (129 aa)) constitute an SCP domain. Cystine bridges form between cysteine 77/cysteine 156, cysteine 95/cysteine 170, and cysteine 151/cysteine 167.

This sequence belongs to the CRISP family. Contains 8 disulfide bonds. In terms of tissue distribution, expressed by the venom gland.

The protein localises to the secreted. Its function is as follows. Blocks ryanodine receptors, and potassium channels. This is Cysteine-rich venom protein VAR3 from Varanus acanthurus (Ridge-tailed monitor).